The primary structure comprises 52 residues: Unknown protein from spot 415 of 2D-PAGE of etiolated coleoptile (52 aa).

The sequence is that of Unknown protein from spot 415 of 2D-PAGE of etiolated coleoptile from Zea mays (Maize).